The primary structure comprises 117 residues: uncharacterized protein (117 aa).

Residues 57-77 (LGFPLGLLVFLHSLIVARFFV) traverse the membrane as a helical segment.

It is found in the membrane. This is an uncharacterized protein from Schizosaccharomyces pombe (strain 972 / ATCC 24843) (Fission yeast).